A 317-amino-acid polypeptide reads, in one-letter code: Acetyl-coenzyme A carboxylase carboxyl transferase subunit alpha (317 aa).

The CoA carboxyltransferase C-terminal domain occupies 39–293; that stretch reads KLEAKAQKAL…KEAVVEALGA (255 aa).

The protein belongs to the AccA family. Acetyl-CoA carboxylase is a heterohexamer composed of biotin carboxyl carrier protein (AccB), biotin carboxylase (AccC) and two subunits each of ACCase subunit alpha (AccA) and ACCase subunit beta (AccD).

Its subcellular location is the cytoplasm. The catalysed reaction is N(6)-carboxybiotinyl-L-lysyl-[protein] + acetyl-CoA = N(6)-biotinyl-L-lysyl-[protein] + malonyl-CoA. It functions in the pathway lipid metabolism; malonyl-CoA biosynthesis; malonyl-CoA from acetyl-CoA: step 1/1. In terms of biological role, component of the acetyl coenzyme A carboxylase (ACC) complex. First, biotin carboxylase catalyzes the carboxylation of biotin on its carrier protein (BCCP) and then the CO(2) group is transferred by the carboxyltransferase to acetyl-CoA to form malonyl-CoA. The polypeptide is Acetyl-coenzyme A carboxylase carboxyl transferase subunit alpha (Beijerinckia indica subsp. indica (strain ATCC 9039 / DSM 1715 / NCIMB 8712)).